The following is a 317-amino-acid chain: Ribosomal RNA small subunit methyltransferase H (317 aa).

S-adenosyl-L-methionine-binding positions include 39–41 (GGH), aspartate 59, phenylalanine 83, aspartate 104, and glutamine 111.

It belongs to the methyltransferase superfamily. RsmH family.

The protein localises to the cytoplasm. It carries out the reaction cytidine(1402) in 16S rRNA + S-adenosyl-L-methionine = N(4)-methylcytidine(1402) in 16S rRNA + S-adenosyl-L-homocysteine + H(+). Specifically methylates the N4 position of cytidine in position 1402 (C1402) of 16S rRNA. The protein is Ribosomal RNA small subunit methyltransferase H of Paraburkholderia phytofirmans (strain DSM 17436 / LMG 22146 / PsJN) (Burkholderia phytofirmans).